The following is a 906-amino-acid chain: Protein translocase subunit SecA (906 aa).

Residues Gln-86, Gly-104 to Thr-108, and Asp-499 each bind ATP. The segment at Lys-862 to Ser-885 is disordered. Zn(2+) contacts are provided by Cys-890, Cys-892, Cys-901, and His-902.

It belongs to the SecA family. Monomer and homodimer. Part of the essential Sec protein translocation apparatus which comprises SecA, SecYEG and auxiliary proteins SecDF-YajC and YidC. Requires Zn(2+) as cofactor.

The protein localises to the cell inner membrane. It localises to the cytoplasm. It carries out the reaction ATP + H2O + cellular proteinSide 1 = ADP + phosphate + cellular proteinSide 2.. Part of the Sec protein translocase complex. Interacts with the SecYEG preprotein conducting channel. Has a central role in coupling the hydrolysis of ATP to the transfer of proteins into and across the cell membrane, serving both as a receptor for the preprotein-SecB complex and as an ATP-driven molecular motor driving the stepwise translocation of polypeptide chains across the membrane. This Rickettsia massiliae (strain Mtu5) protein is Protein translocase subunit SecA.